Consider the following 206-residue polypeptide: dTTP/UTP pyrophosphatase (206 aa).

D87 serves as the catalytic Proton acceptor.

The protein belongs to the Maf family. YhdE subfamily. The cofactor is a divalent metal cation.

The protein resides in the cytoplasm. It catalyses the reaction dTTP + H2O = dTMP + diphosphate + H(+). The catalysed reaction is UTP + H2O = UMP + diphosphate + H(+). In terms of biological role, nucleoside triphosphate pyrophosphatase that hydrolyzes dTTP and UTP. May have a dual role in cell division arrest and in preventing the incorporation of modified nucleotides into cellular nucleic acids. In Aromatoleum aromaticum (strain DSM 19018 / LMG 30748 / EbN1) (Azoarcus sp. (strain EbN1)), this protein is dTTP/UTP pyrophosphatase.